The primary structure comprises 395 residues: Putative nickel insertion protein (395 aa).

This sequence belongs to the LarC family.

The polypeptide is Putative nickel insertion protein (Roseiflexus castenholzii (strain DSM 13941 / HLO8)).